We begin with the raw amino-acid sequence, 355 residues long: Histidinol-phosphate aminotransferase 2 (355 aa).

The residue at position 210 (lysine 210) is an N6-(pyridoxal phosphate)lysine.

Belongs to the class-II pyridoxal-phosphate-dependent aminotransferase family. Histidinol-phosphate aminotransferase subfamily. Homodimer. It depends on pyridoxal 5'-phosphate as a cofactor.

The enzyme catalyses L-histidinol phosphate + 2-oxoglutarate = 3-(imidazol-4-yl)-2-oxopropyl phosphate + L-glutamate. It functions in the pathway amino-acid biosynthesis; L-histidine biosynthesis; L-histidine from 5-phospho-alpha-D-ribose 1-diphosphate: step 7/9. This is Histidinol-phosphate aminotransferase 2 from Gluconobacter oxydans (strain 621H) (Gluconobacter suboxydans).